The chain runs to 100 residues: Large ribosomal subunit protein eL30 (100 aa).

Belongs to the eukaryotic ribosomal protein eL30 family.

The protein is Large ribosomal subunit protein eL30 (rpl30e) of Aeropyrum pernix (strain ATCC 700893 / DSM 11879 / JCM 9820 / NBRC 100138 / K1).